A 391-amino-acid polypeptide reads, in one-letter code: Processive diacylglycerol beta-glucosyltransferase (391 aa).

The protein belongs to the glycosyltransferase 28 family. UgtP subfamily.

Its subcellular location is the cell membrane. The catalysed reaction is a 1,2-diacyl-3-O-(beta-D-glucopyranosyl)-sn-glycerol + UDP-alpha-D-glucose = a 1,2-diacyl-3-O-(beta-D-Glc-(1-&gt;6)-beta-D-Glc)-sn-glycerol + UDP + H(+). It carries out the reaction a 1,2-diacyl-sn-glycerol + UDP-alpha-D-glucose = a 1,2-diacyl-3-O-(beta-D-glucopyranosyl)-sn-glycerol + UDP + H(+). It participates in glycolipid metabolism; diglucosyl-diacylglycerol biosynthesis. In terms of biological role, processive glucosyltransferase involved in the biosynthesis of both the bilayer- and non-bilayer-forming membrane glucolipids. Is able to successively transfer two glucosyl residues to diacylglycerol (DAG), thereby catalyzing the formation of beta-monoglucosyl-DAG (3-O-(beta-D-glucopyranosyl)-1,2-diacyl-sn-glycerol) and beta-diglucosyl-DAG (3-O-(beta-D-glucopyranosyl-beta-(1-&gt;6)-D-glucopyranosyl)-1,2-diacyl-sn-glycerol). Beta-diglucosyl-DAG is the predominant glycolipid found in Bacillales and is also used as a membrane anchor for lipoteichoic acid (LTA). The chain is Processive diacylglycerol beta-glucosyltransferase from Staphylococcus epidermidis (strain ATCC 35984 / DSM 28319 / BCRC 17069 / CCUG 31568 / BM 3577 / RP62A).